The primary structure comprises 503 residues: MTAVDAPDLLDYDDVLAKYEPVLGMEVHVELGTETKMFCPCPTEFGAEPNTQVCPVCLGLPGSLPVVNEAAVESAIRIGLALNCSITPWGRFARKNYFYPDQPKNYQISQYDEPIATDGHLDVVLDDGTTWRVEIERAHMEEDTGKSLHVGGATGRIHGASHSLLDYNRAGVPLVEIVTKTISGAGARAPEVARAYVTALRDLLKSLNVSDVRMDQGSMRCDANVSLMPIGATELGTRTETKNVNSLKSVEVAVRYEMRRQAAVLEAGGEVIQETRHFQEADGTTSPGRRKETAEDYRYFPEPDLEPVAPSAEWIEELRGTLPELPWVRRARIQADWGVSDEVMRDLVNAGALDLVIATVEAGASPEAARSWWVSYLAQQANTRGVELAELPITPAQVAQVVALIDSGKLNNKVARQVVDHVLEGEGDPEQVVANHPELVVERDDTKLKAAVEEALAANPDIAEKIRGGKVAAAGKIVGDVMKATRGQADPARVKELVIEACG.

Belongs to the GatB/GatE family. GatB subfamily. As to quaternary structure, heterotrimer of A, B and C subunits.

It carries out the reaction L-glutamyl-tRNA(Gln) + L-glutamine + ATP + H2O = L-glutaminyl-tRNA(Gln) + L-glutamate + ADP + phosphate + H(+). It catalyses the reaction L-aspartyl-tRNA(Asn) + L-glutamine + ATP + H2O = L-asparaginyl-tRNA(Asn) + L-glutamate + ADP + phosphate + 2 H(+). Allows the formation of correctly charged Asn-tRNA(Asn) or Gln-tRNA(Gln) through the transamidation of misacylated Asp-tRNA(Asn) or Glu-tRNA(Gln) in organisms which lack either or both of asparaginyl-tRNA or glutaminyl-tRNA synthetases. The reaction takes place in the presence of glutamine and ATP through an activated phospho-Asp-tRNA(Asn) or phospho-Glu-tRNA(Gln). This chain is Aspartyl/glutamyl-tRNA(Asn/Gln) amidotransferase subunit B, found in Rhodococcus jostii (strain RHA1).